The sequence spans 189 residues: Streptothricin acetyltransferase (189 aa).

The N-acetyltransferase domain maps to 44 to 189; the sequence is FALREVPADP…HALYMSMPCP (146 aa). The tract at residues 55-76 is disordered; sequence LVKVFPDDGGSDGEDGAEGEDA. Acidic residues predominate over residues 63 to 75; that stretch reads GGSDGEDGAEGED.

It belongs to the acetyltransferase family. GNAT subfamily.

The catalysed reaction is streptothricin F + acetyl-CoA = N(beta)-acetylstreptothricin F + CoA + H(+). In terms of biological role, involved in resistance to streptothricin, a broad-spectrum antibiotic produced by streptomycetes. Detoxifies streptothricin via acetylation of the beta amino group of the first beta-lysyl moiety of streptothricin. This Streptomyces lavendulae protein is Streptothricin acetyltransferase.